A 159-amino-acid polypeptide reads, in one-letter code: NADH-quinone oxidoreductase subunit B (159 aa).

Cys-36, Cys-37, Cys-102, and Cys-132 together coordinate [4Fe-4S] cluster.

The protein belongs to the complex I 20 kDa subunit family. In terms of assembly, NDH-1 is composed of 14 different subunits. Subunits NuoB, C, D, E, F, and G constitute the peripheral sector of the complex. [4Fe-4S] cluster serves as cofactor.

It is found in the cell inner membrane. It carries out the reaction a quinone + NADH + 5 H(+)(in) = a quinol + NAD(+) + 4 H(+)(out). Its function is as follows. NDH-1 shuttles electrons from NADH, via FMN and iron-sulfur (Fe-S) centers, to quinones in the respiratory chain. Couples the redox reaction to proton translocation (for every two electrons transferred, four hydrogen ions are translocated across the cytoplasmic membrane), and thus conserves the redox energy in a proton gradient. This Albidiferax ferrireducens (strain ATCC BAA-621 / DSM 15236 / T118) (Rhodoferax ferrireducens) protein is NADH-quinone oxidoreductase subunit B.